The following is a 496-amino-acid chain: Glutamyl-tRNA(Gln) amidotransferase subunit A (496 aa).

Catalysis depends on charge relay system residues K75 and S150. The active-site Acyl-ester intermediate is S174.

Belongs to the amidase family. GatA subfamily. Heterotrimer of A, B and C subunits.

The enzyme catalyses L-glutamyl-tRNA(Gln) + L-glutamine + ATP + H2O = L-glutaminyl-tRNA(Gln) + L-glutamate + ADP + phosphate + H(+). In terms of biological role, allows the formation of correctly charged Gln-tRNA(Gln) through the transamidation of misacylated Glu-tRNA(Gln) in organisms which lack glutaminyl-tRNA synthetase. The reaction takes place in the presence of glutamine and ATP through an activated gamma-phospho-Glu-tRNA(Gln). This is Glutamyl-tRNA(Gln) amidotransferase subunit A from Burkholderia cenocepacia (strain HI2424).